A 279-amino-acid polypeptide reads, in one-letter code: Biotin synthase (279 aa).

The Radical SAM core domain occupies 2-228 (KTIMLCAISS…NARIMIAGGR (227 aa)). C17, C21, and C24 together coordinate [4Fe-4S] cluster. [2Fe-2S] cluster-binding residues include C61, C96, C154, and R221.

The protein belongs to the radical SAM superfamily. Biotin synthase family. As to quaternary structure, homodimer. Requires [4Fe-4S] cluster as cofactor. [2Fe-2S] cluster is required as a cofactor.

It carries out the reaction (4R,5S)-dethiobiotin + (sulfur carrier)-SH + 2 reduced [2Fe-2S]-[ferredoxin] + 2 S-adenosyl-L-methionine = (sulfur carrier)-H + biotin + 2 5'-deoxyadenosine + 2 L-methionine + 2 oxidized [2Fe-2S]-[ferredoxin]. It participates in cofactor biosynthesis; biotin biosynthesis; biotin from 7,8-diaminononanoate: step 2/2. In terms of biological role, catalyzes the conversion of dethiobiotin (DTB) to biotin by the insertion of a sulfur atom into dethiobiotin via a radical-based mechanism. The sequence is that of Biotin synthase from Campylobacter curvus (strain 525.92).